Here is a 407-residue protein sequence, read N- to C-terminus: Carbamoyl phosphate synthase small chain (407 aa).

The segment at 1-203 (MSQNESGTIA…EPCGEYEGKE (203 aa)) is CPSase. Positions 61, 255, and 257 each coordinate L-glutamine. The 199-residue stretch at 207–405 (TVAAVDLGIK…CELMKNNSKE (199 aa)) folds into the Glutamine amidotransferase type-1 domain. Cys-283 serves as the catalytic Nucleophile. L-glutamine contacts are provided by Phe-284, Gln-287, Asn-325, Gly-327, and Phe-328. Catalysis depends on residues His-378 and Glu-380.

It belongs to the CarA family. As to quaternary structure, composed of two chains; the small (or glutamine) chain promotes the hydrolysis of glutamine to ammonia, which is used by the large (or ammonia) chain to synthesize carbamoyl phosphate. Tetramer of heterodimers (alpha,beta)4.

The catalysed reaction is hydrogencarbonate + L-glutamine + 2 ATP + H2O = carbamoyl phosphate + L-glutamate + 2 ADP + phosphate + 2 H(+). The enzyme catalyses L-glutamine + H2O = L-glutamate + NH4(+). The protein operates within amino-acid biosynthesis; L-arginine biosynthesis; carbamoyl phosphate from bicarbonate: step 1/1. Its pathway is pyrimidine metabolism; UMP biosynthesis via de novo pathway; (S)-dihydroorotate from bicarbonate: step 1/3. Functionally, small subunit of the glutamine-dependent carbamoyl phosphate synthetase (CPSase). CPSase catalyzes the formation of carbamoyl phosphate from the ammonia moiety of glutamine, carbonate, and phosphate donated by ATP, constituting the first step of 2 biosynthetic pathways, one leading to arginine and/or urea and the other to pyrimidine nucleotides. The small subunit (glutamine amidotransferase) binds and cleaves glutamine to supply the large subunit with the substrate ammonia. The polypeptide is Carbamoyl phosphate synthase small chain (Bifidobacterium longum (strain NCC 2705)).